A 209-amino-acid polypeptide reads, in one-letter code: Response regulator protein VraR (209 aa).

Residues 4 to 120 (KVLFVDDHEM…DIADAVRKTS (117 aa)) form the Response regulatory domain. At D55 the chain carries 4-aspartylphosphate. The region spanning 141 to 206 (RAELYEMLTE…QAVIYAFQHN (66 aa)) is the HTH luxR-type domain. The segment at residues 165–184 (NQEIASASHITIKTVKTHVS) is a DNA-binding region (H-T-H motif).

In terms of assembly, homodimer. Phosphorylated by VraS. Phosphorylation state of VraR controls dimerization of the protein.

Its subcellular location is the cytoplasm. Functionally, member of the two-component regulatory system VraS/VraR involved in the control of the cell wall peptidoglycan biosynthesis. Upon cellular stress, the histidine kinase VraS transfers the phosphoryl group onto VraR. Upon phosphorylation, VraR dimerizes at the N-terminal domain. In turn, phosphorylation-induced dimerization expands and enhances the VraR binding to its own promoter leading to increased expression and subsequent modulation of as many as 40 genes, which ultimately constitute the S.aureus response to cell wall damage. In addition, inhibits the host autophagic flux and delays the early stage of autophagosome formation, thereby promoting bacterial survival. Facilitates the ability of S.aureus to resist host polymorphonuclear leukocytes-mediated phagocytosis and killing thus contributing to immune evasion. This chain is Response regulator protein VraR (vraR), found in Staphylococcus aureus (strain Mu3 / ATCC 700698).